Consider the following 574-residue polypeptide: MSCARITVTLPYRSAKTSIQRGITHCPALLRPRFSACTPLASAVPLSSTPLINGDNSPLKNTHQHVEERSSKRREYLLEETARKLQRNDTESVEKLKLIDNIQRLGIGYYFEDAIDAVLRSPFSAEEEEDLFTAALRFRLLRHNGIQVTPEIFLKFKDERGEFDESDTLGLLSLYEASNLGVTGEEILEEAMEFAEPRLRRSLSELAAPLRSEVAQALDVPRHLRMARLEARRFIEQYGKQSDHDGDLLELAILDYNQVQAQHQSELTEITRWWKQLGLVEKLGFGRDRALECFMWTMGILPHPKYSSSRIESAKAAALLYVIDDIFDTYGKMDELILFTDAIRRWDLEAMEGLPEYMKICYMALYNTTNEICYRVLKDTGRIALPYLKSVWIETIEAYMVEVKWFSGGSAPKLEEYIENGASTVGAYMVLVHLFFLIGEGLTHQNVLFFKQKPYHKPFSAAGRIFRLWDDLGTSQEEEERGDMASSIRLFMKEYKLSTVEEARSCVLEEISRLWKDLNEGLISIKDALPLTIVKVALNIARTSQVVYKHEQHTYMLSVDNYVEALFFTPLLSS.

Residues 1–40 constitute a chloroplast transit peptide; the sequence is MSCARITVTLPYRSAKTSIQRGITHCPALLRPRFSACTPL. Residues 52 to 61 are compositionally biased toward polar residues; sequence INGDNSPLKN. Residues 52-71 are disordered; that stretch reads INGDNSPLKNTHQHVEERSS. (2E)-geranyl diphosphate contacts are provided by arginine 287, aspartate 324, aspartate 328, arginine 467, and aspartate 470. Mg(2+) contacts are provided by aspartate 324 and aspartate 328. Positions 324–328 match the DDXXD motif motif; that stretch reads DDIFD. Aspartate 470, threonine 474, and glutamate 478 together coordinate Mg(2+).

The protein belongs to the terpene synthase family. Tpsb subfamily. Mg(2+) is required as a cofactor. It depends on Mn(2+) as a cofactor.

Its subcellular location is the plastid. It localises to the chloroplast. It catalyses the reaction (2E)-geranyl diphosphate + H2O = (R)-linalool + diphosphate. It participates in secondary metabolite biosynthesis; terpenoid biosynthesis. Functionally, monoterpene synthase that catalyzes the formation of (3R)-linalool from geranyl diphosphate. The chain is R-linalool synthase, chloroplastic (LIS) from Ocimum basilicum (Sweet basil).